Consider the following 212-residue polypeptide: Ribonuclease HII (212 aa).

The RNase H type-2 domain maps to 22–212 (ILIAGLDEAG…APLKGMIDGL (191 aa)). A divalent metal cation-binding residues include aspartate 28, glutamate 29, and aspartate 123.

This sequence belongs to the RNase HII family. Requires Mn(2+) as cofactor. The cofactor is Mg(2+).

It is found in the cytoplasm. It catalyses the reaction Endonucleolytic cleavage to 5'-phosphomonoester.. Its function is as follows. Endonuclease that specifically degrades the RNA of RNA-DNA hybrids. The protein is Ribonuclease HII of Dehalococcoides mccartyi (strain ATCC BAA-2100 / JCM 16839 / KCTC 5957 / BAV1).